A 62-amino-acid polypeptide reads, in one-letter code: Short neurotoxin 1 (62 aa).

Residues 1 to 20 (LECHNQQSSEPPTTTRCSGG) are disordered. 4 cysteine pairs are disulfide-bonded: C3/C24, C17/C41, C43/C54, and C55/C60.

Belongs to the three-finger toxin family. Short-chain subfamily. Type I alpha-neurotoxin sub-subfamily. Expressed by the venom gland.

The protein resides in the secreted. In terms of biological role, binds to muscle nicotinic acetylcholine receptor (nAChR) and inhibit acetylcholine from binding to the receptor, thereby impairing neuromuscular transmission. The chain is Short neurotoxin 1 from Naja mossambica (Mozambique spitting cobra).